The chain runs to 358 residues: WD repeat-containing protein 53 (358 aa).

WD repeat units lie at residues 8-46 (GHSS…LGHT), 92-131 (VNEE…ISRS), 134-174 (RHSN…PLWI), 195-234 (LNPA…CEQE), and 239-278 (GHSL…EKKH). Positions 278–294 (HKSPTKHTHRKKTKRAA) are enriched in basic residues. The disordered stretch occupies residues 278-309 (HKSPTKHTHRKKTKRAAYTKQGGGTHASVTGE).

It belongs to the WD repeat WDR53 family.

This is WD repeat-containing protein 53 (WDR53) from Bos taurus (Bovine).